The following is a 301-amino-acid chain: tRNA dimethylallyltransferase (301 aa).

12–19 (GPTASGKT) contributes to the ATP binding site. Position 14 to 19 (14 to 19 (TASGKT)) interacts with substrate. The tract at residues 37 to 40 (DSLS) is interaction with substrate tRNA.

It belongs to the IPP transferase family. In terms of assembly, monomer. Mg(2+) serves as cofactor.

It carries out the reaction adenosine(37) in tRNA + dimethylallyl diphosphate = N(6)-dimethylallyladenosine(37) in tRNA + diphosphate. In terms of biological role, catalyzes the transfer of a dimethylallyl group onto the adenine at position 37 in tRNAs that read codons beginning with uridine, leading to the formation of N6-(dimethylallyl)adenosine (i(6)A). The polypeptide is tRNA dimethylallyltransferase (Sulfurovum sp. (strain NBC37-1)).